Consider the following 1233-residue polypeptide: DNA-directed RNA polymerase subunit beta' (1233 aa).

4 residues coordinate Zn(2+): cysteine 61, cysteine 63, cysteine 76, and cysteine 79. Residues aspartate 455, aspartate 457, and aspartate 459 each contribute to the Mg(2+) site. 4 residues coordinate Zn(2+): cysteine 824, cysteine 898, cysteine 905, and cysteine 908. A compositionally biased stretch (basic and acidic residues) spans glutamate 1211–proline 1220. The disordered stretch occupies residues glutamate 1211–lysine 1233. Residues alanine 1221–lysine 1233 are compositionally biased toward polar residues.

This sequence belongs to the RNA polymerase beta' chain family. The RNAP catalytic core consists of 2 alpha, 1 beta, 1 beta' and 1 omega subunit. When a sigma factor is associated with the core the holoenzyme is formed, which can initiate transcription. Mg(2+) is required as a cofactor. Zn(2+) serves as cofactor.

It carries out the reaction RNA(n) + a ribonucleoside 5'-triphosphate = RNA(n+1) + diphosphate. In terms of biological role, DNA-dependent RNA polymerase catalyzes the transcription of DNA into RNA using the four ribonucleoside triphosphates as substrates. In Oenococcus oeni (strain ATCC BAA-331 / PSU-1), this protein is DNA-directed RNA polymerase subunit beta'.